Here is a 440-residue protein sequence, read N- to C-terminus: Na(+)/H(+) antiporter NhaA (440 aa).

11 helical membrane-spanning segments follow: residues 25–45 (FLHI…VALV), 76–96 (LHHV…GLEV), 112–132 (TLPI…YLSM), 141–161 (GWGI…AILG), 170–190 (VLLL…IAIG), 194–214 (SLDG…HFLS), 225–245 (VIVG…ATLI), 312–332 (HPWT…GVLI), 345–365 (VVIG…WLVI), 378–398 (WPIL…ALFI), and 414–434 (GVLV…LWTL).

The protein belongs to the NhaA Na(+)/H(+) (TC 2.A.33) antiporter family.

The protein resides in the cell inner membrane. The enzyme catalyses Na(+)(in) + 2 H(+)(out) = Na(+)(out) + 2 H(+)(in). Its function is as follows. Na(+)/H(+) antiporter that extrudes sodium in exchange for external protons. The protein is Na(+)/H(+) antiporter NhaA of Rhodopirellula baltica (strain DSM 10527 / NCIMB 13988 / SH1).